The chain runs to 360 residues: Photosystem II protein D1 (360 aa).

The next 3 membrane-spanning stretches (helical) occupy residues Tyr29–Ala46, His118–Leu133, and Trp142–Ala156. Residue His118 coordinates chlorophyll a. Position 126 (Tyr126) interacts with pheophytin a. 2 residues coordinate [CaMn4O5] cluster: Asp170 and Glu189. The helical transmembrane segment at Phe197–Leu218 threads the bilayer. His198 contacts chlorophyll a. A quinone-binding positions include His215 and Ser264–Phe265. Fe cation is bound at residue His215. Position 272 (His272) interacts with Fe cation. The chain crosses the membrane as a helical span at residues Phe274 to Leu288. His332, Glu333, Asp342, and Ala344 together coordinate [CaMn4O5] cluster. The propeptide occupies Ala345 to Gly360.

The protein belongs to the reaction center PufL/M/PsbA/D family. PSII is composed of 1 copy each of membrane proteins PsbA, PsbB, PsbC, PsbD, PsbE, PsbF, PsbH, PsbI, PsbJ, PsbK, PsbL, PsbM, PsbT, PsbX, PsbY, PsbZ, Psb30/Ycf12, peripheral proteins PsbO, CyanoQ (PsbQ), PsbU, PsbV and a large number of cofactors. It forms dimeric complexes. The cofactor is The D1/D2 heterodimer binds P680, chlorophylls that are the primary electron donor of PSII, and subsequent electron acceptors. It shares a non-heme iron and each subunit binds pheophytin, quinone, additional chlorophylls, carotenoids and lipids. D1 provides most of the ligands for the Mn4-Ca-O5 cluster of the oxygen-evolving complex (OEC). There is also a Cl(-1) ion associated with D1 and D2, which is required for oxygen evolution. The PSII complex binds additional chlorophylls, carotenoids and specific lipids.. Post-translationally, tyr-161 forms a radical intermediate that is referred to as redox-active TyrZ, YZ or Y-Z. C-terminally processed by CtpA; processing is essential to allow assembly of the oxygen-evolving complex and thus photosynthetic growth.

It is found in the cellular thylakoid membrane. It catalyses the reaction 2 a plastoquinone + 4 hnu + 2 H2O = 2 a plastoquinol + O2. Photosystem II (PSII) is a light-driven water:plastoquinone oxidoreductase that uses light energy to abstract electrons from H(2)O, generating O(2) and a proton gradient subsequently used for ATP formation. It consists of a core antenna complex that captures photons, and an electron transfer chain that converts photonic excitation into a charge separation. The D1/D2 (PsbA/PsbD) reaction center heterodimer binds P680, the primary electron donor of PSII as well as several subsequent electron acceptors. The polypeptide is Photosystem II protein D1 (Trichormus azollae (Anabaena azollae)).